The following is a 213-amino-acid chain: G2/mitotic-specific cyclin-1 (213 aa).

Residues 1–23 form a disordered region; it reads MKFSEEKNVSNNPTNFEGGLDSR.

The protein belongs to the cyclin family. Cyclin AB subfamily. Interacts with the CDC2 protein kinase to form a serine/threonine kinase holoenzyme complex also known as maturation promoting factor (MPF). The cyclin subunit imparts substrate specificity to the complex. As to expression, only expressed in organs with dividing cells.

Functionally, essential for the control of the cell cycle at the G2/M (mitosis) transition. The protein is G2/mitotic-specific cyclin-1 of Medicago sativa (Alfalfa).